The following is a 120-amino-acid chain: MDISIQCISYHTSLSKDRCSFEIGYLEYFYYISITNITILNLKVEYPKILEIHTITSQLLPKYSPPWFDIIKAPYGNKIPGIVMLFKCISISRILVSLLHYPYARRYAIVFVPSSSYSVN.

This is an uncharacterized protein from Saccharomyces cerevisiae (strain ATCC 204508 / S288c) (Baker's yeast).